The following is a 329-amino-acid chain: Palmitoyltransferase pfa3 (329 aa).

The next 5 membrane-spanning stretches (helical) occupy residues 14-34 (VLVI…MSGV), 49-69 (VGII…LTNL), 141-161 (FFFL…YSTF), 177-197 (AIYL…SIVM), and 243-263 (IMGK…GEGV). The DHHC domain occupies 97 to 147 (RFCEKCQEYKCDRSHHCSQCNKCILRMDHHCMWFKNCVGFRNHKFFFLECF).

The protein belongs to the DHHC palmitoyltransferase family. PFA3 subfamily. In terms of processing, autopalmitoylated.

It localises to the vacuole membrane. Its subcellular location is the golgi apparatus membrane. It carries out the reaction L-cysteinyl-[protein] + hexadecanoyl-CoA = S-hexadecanoyl-L-cysteinyl-[protein] + CoA. Functionally, palmitoyltransferase specific for VAC8. Palmitoylates VAC8 at one or more of its N-terminal cysteine residues, which is required for its proper membrane localization. This is Palmitoyltransferase pfa3 (pfa3) from Schizosaccharomyces pombe (strain 972 / ATCC 24843) (Fission yeast).